We begin with the raw amino-acid sequence, 679 residues long: UvrABC system protein C (679 aa).

In terms of domain architecture, GIY-YIG spans 65–143 (NSPGVYRMLN…IKRLRPRFNV (79 aa)). Positions 253–288 (QKVKSHMAEAMNQAAEDLDFERAAIYRDRLAALSHV) constitute a UVR domain.

The protein belongs to the UvrC family. As to quaternary structure, interacts with UvrB in an incision complex.

Its subcellular location is the cytoplasm. Its function is as follows. The UvrABC repair system catalyzes the recognition and processing of DNA lesions. UvrC both incises the 5' and 3' sides of the lesion. The N-terminal half is responsible for the 3' incision and the C-terminal half is responsible for the 5' incision. The protein is UvrABC system protein C of Rhizobium etli (strain ATCC 51251 / DSM 11541 / JCM 21823 / NBRC 15573 / CFN 42).